We begin with the raw amino-acid sequence, 331 residues long: Glutaminase (331 aa).

Residues Ser77, Asn129, Glu173, Asn180, Tyr204, Tyr256, and Val274 each contribute to the substrate site.

It belongs to the glutaminase family. As to quaternary structure, homotetramer.

The enzyme catalyses L-glutamine + H2O = L-glutamate + NH4(+). In Oceanobacillus iheyensis (strain DSM 14371 / CIP 107618 / JCM 11309 / KCTC 3954 / HTE831), this protein is Glutaminase.